Reading from the N-terminus, the 129-residue chain is Protein Wnt-6 (129 aa).

5 disulfides stabilise this stretch: Cys3-Cys17, Cys5-Cys12, Cys75-Cys106, Cys91-Cys101, and Cys128-Cys129. Ser9 carries the O-palmitoleoyl serine; by PORCN lipid modification. The N-linked (GlcNAc...) asparagine glycan is linked to Asn92.

The protein belongs to the Wnt family. Post-translationally, palmitoleoylation is required for efficient binding to frizzled receptors. Depalmitoleoylation leads to Wnt signaling pathway inhibition. In terms of tissue distribution, at tailbud: dorsal, punctate; in adult: brain and heart.

The protein localises to the secreted. The protein resides in the extracellular space. Its subcellular location is the extracellular matrix. Functionally, ligand for members of the frizzled family of seven transmembrane receptors. Probable developmental protein. May be a signaling molecule which affects the development of discrete regions of tissues. Is likely to signal over only few cell diameters. The protein is Protein Wnt-6 (wnt6) of Xenopus laevis (African clawed frog).